Reading from the N-terminus, the 316-residue chain is Aspartate carbamoyltransferase catalytic subunit (316 aa).

Carbamoyl phosphate contacts are provided by R56 and T57. Position 84 (K84) interacts with L-aspartate. Carbamoyl phosphate contacts are provided by R106, H139, and Q142. 2 residues coordinate L-aspartate: R172 and R224. Positions 268 and 269 each coordinate carbamoyl phosphate.

The protein belongs to the aspartate/ornithine carbamoyltransferase superfamily. ATCase family. As to quaternary structure, heterododecamer (2C3:3R2) of six catalytic PyrB chains organized as two trimers (C3), and six regulatory PyrI chains organized as three dimers (R2).

The enzyme catalyses carbamoyl phosphate + L-aspartate = N-carbamoyl-L-aspartate + phosphate + H(+). It functions in the pathway pyrimidine metabolism; UMP biosynthesis via de novo pathway; (S)-dihydroorotate from bicarbonate: step 2/3. In terms of biological role, catalyzes the condensation of carbamoyl phosphate and aspartate to form carbamoyl aspartate and inorganic phosphate, the committed step in the de novo pyrimidine nucleotide biosynthesis pathway. This is Aspartate carbamoyltransferase catalytic subunit from Ligilactobacillus salivarius (strain UCC118) (Lactobacillus salivarius).